The sequence spans 523 residues: 2-isopropylmalate synthase (523 aa).

The 263-residue stretch at 5-267 folds into the Pyruvate carboxyltransferase domain; sequence VIIFDTTLRD…HTNINHHEIW (263 aa). Mn(2+) contacts are provided by Asp14, His202, His204, and Asn238. Residues 392–523 form a regulatory domain region; it reads RLDYFSVQSG…QNKENNKETV (132 aa).

It belongs to the alpha-IPM synthase/homocitrate synthase family. LeuA type 1 subfamily. In terms of assembly, homodimer. Requires Mn(2+) as cofactor.

Its subcellular location is the cytoplasm. The catalysed reaction is 3-methyl-2-oxobutanoate + acetyl-CoA + H2O = (2S)-2-isopropylmalate + CoA + H(+). It participates in amino-acid biosynthesis; L-leucine biosynthesis; L-leucine from 3-methyl-2-oxobutanoate: step 1/4. Its function is as follows. Catalyzes the condensation of the acetyl group of acetyl-CoA with 3-methyl-2-oxobutanoate (2-ketoisovalerate) to form 3-carboxy-3-hydroxy-4-methylpentanoate (2-isopropylmalate). In Salmonella agona (strain SL483), this protein is 2-isopropylmalate synthase.